The chain runs to 351 residues: Uroporphyrinogen decarboxylase (351 aa).

Substrate contacts are provided by residues 32–36 (RQAGR), phenylalanine 51, aspartate 82, tyrosine 157, serine 211, and histidine 326.

This sequence belongs to the uroporphyrinogen decarboxylase family. In terms of assembly, homodimer.

It localises to the cytoplasm. The enzyme catalyses uroporphyrinogen III + 4 H(+) = coproporphyrinogen III + 4 CO2. Its pathway is porphyrin-containing compound metabolism; protoporphyrin-IX biosynthesis; coproporphyrinogen-III from 5-aminolevulinate: step 4/4. In terms of biological role, catalyzes the decarboxylation of four acetate groups of uroporphyrinogen III to yield coproporphyrinogen III. In Caulobacter vibrioides (strain ATCC 19089 / CIP 103742 / CB 15) (Caulobacter crescentus), this protein is Uroporphyrinogen decarboxylase.